We begin with the raw amino-acid sequence, 69 residues long: ATP synthase F(0) complex subunit e, mitochondrial (69 aa).

Residue Lys-34 is modified to N6-acetyllysine. Ser-66 is modified (phosphoserine).

It belongs to the ATPase e subunit family. Component of the ATP synthase complex composed at least of ATP5F1A/subunit alpha, ATP5F1B/subunit beta, ATP5MC1/subunit c (homooctomer), MT-ATP6/subunit a, MT-ATP8/subunit 8, ATP5ME/subunit e, ATP5MF/subunit f, ATP5MG/subunit g, ATP5MK/subunit k, ATP5MJ/subunit j, ATP5F1C/subunit gamma, ATP5F1D/subunit delta, ATP5F1E/subunit epsilon, ATP5PF/subunit F6, ATP5PB/subunit b, ATP5PD/subunit d, ATP5PO/subunit OSCP. ATP synthase complex consists of a soluble F(1) head domain (subunits alpha(3) and beta(3)) - the catalytic core - and a membrane F(0) domain - the membrane proton channel (subunits c, a, 8, e, f, g, k and j). These two domains are linked by a central stalk (subunits gamma, delta, and epsilon) rotating inside the F1 region and a stationary peripheral stalk (subunits F6, b, d, and OSCP).

Its subcellular location is the mitochondrion. The protein localises to the mitochondrion inner membrane. Its function is as follows. Subunit e, of the mitochondrial membrane ATP synthase complex (F(1)F(0) ATP synthase or Complex V) that produces ATP from ADP in the presence of a proton gradient across the membrane which is generated by electron transport complexes of the respiratory chain. ATP synthase complex consist of a soluble F(1) head domain - the catalytic core - and a membrane F(1) domain - the membrane proton channel. These two domains are linked by a central stalk rotating inside the F(1) region and a stationary peripheral stalk. During catalysis, ATP synthesis in the catalytic domain of F(1) is coupled via a rotary mechanism of the central stalk subunits to proton translocation. In vivo, can only synthesize ATP although its ATP hydrolase activity can be activated artificially in vitro. Part of the complex F(0) domain. This is ATP synthase F(0) complex subunit e, mitochondrial from Homo sapiens (Human).